The chain runs to 187 residues: Ribonuclease HII (187 aa).

Residues 1-187 (MIILGIDEAG…YKPVQVLLNE (187 aa)) form the RNase H type-2 domain. 3 residues coordinate a divalent metal cation: aspartate 7, glutamate 8, and aspartate 99.

This sequence belongs to the RNase HII family. The cofactor is Mn(2+). Requires Mg(2+) as cofactor.

The protein localises to the cytoplasm. It catalyses the reaction Endonucleolytic cleavage to 5'-phosphomonoester.. Its function is as follows. Endonuclease that specifically degrades the RNA of RNA-DNA hybrids. This Francisella tularensis subsp. mediasiatica (strain FSC147) protein is Ribonuclease HII.